Here is a 251-residue protein sequence, read N- to C-terminus: Prolactin-7B1 (251 aa).

Residues 1-29 form the signal peptide; it reads MNTSLTQLCFWALQILLMSNLLLWEDVVS. 2 N-linked (GlcNAc...) asparagine glycosylation sites follow: Asn-2 and Asn-73. 2 disulfide bridges follow: Cys-100-Cys-216 and Cys-233-Cys-241.

The protein belongs to the somatotropin/prolactin family. Expression restricted to placenta. Abundantly expressed in trophoblast cells of the junctional zone and trophoblasts migrating into the mesometrial decidua.

Its subcellular location is the secreted. The protein is Prolactin-7B1 (Prl7b1) of Mus musculus (Mouse).